Here is a 242-residue protein sequence, read N- to C-terminus: 3-deoxy-manno-octulosonate cytidylyltransferase (242 aa).

It belongs to the KdsB family.

It is found in the cytoplasm. The catalysed reaction is 3-deoxy-alpha-D-manno-oct-2-ulosonate + CTP = CMP-3-deoxy-beta-D-manno-octulosonate + diphosphate. Its pathway is nucleotide-sugar biosynthesis; CMP-3-deoxy-D-manno-octulosonate biosynthesis; CMP-3-deoxy-D-manno-octulosonate from 3-deoxy-D-manno-octulosonate and CTP: step 1/1. It functions in the pathway bacterial outer membrane biogenesis; lipopolysaccharide biosynthesis. Activates KDO (a required 8-carbon sugar) for incorporation into bacterial lipopolysaccharide in Gram-negative bacteria. The protein is 3-deoxy-manno-octulosonate cytidylyltransferase of Mesorhizobium japonicum (strain LMG 29417 / CECT 9101 / MAFF 303099) (Mesorhizobium loti (strain MAFF 303099)).